The primary structure comprises 632 residues: Gamma-aminobutyric acid receptor subunit theta (632 aa).

An N-terminal signal peptide occupies residues 1–21 (MGIRGMLRAAVILLLIRTWLA). Over 22–268 (EGNYPSPIPK…FQVQREVNSY (247 aa)) the chain is Extracellular. A glycan (N-linked (GlcNAc...) asparagine) is linked at asparagine 127. Cysteine 183 and cysteine 197 are joined by a disulfide. The chain crosses the membrane as a helical span at residues 269–289 (LVQVYWPTVLTTITSWISFWM). The Cytoplasmic portion of the chain corresponds to 290 to 297 (NYDSSAAR). Residues 298 to 315 (VTIGLTSMLILTTIDSHL) form a helical membrane-spanning segment. Residues 316–326 (RDKLPNISCIK) lie on the Extracellular side of the membrane. The chain crosses the membrane as a helical span at residues 327–347 (AIDIYILVCLFFVFLSLLEYV). Residues 348–611 (YINYLFYSRG…DYVPKVDKWS (264 aa)) are Cytoplasmic-facing. Disordered stretches follow at residues 410-458 (SPES…STSE) and 491-523 (HGVTHDHEDSNESLSSDERHGHGPSGKPMLHHG). Positions 413–425 (SLGSLTSTSEQAQ) are enriched in polar residues. Residues 426–439 (LATSESLSPLTSLS) show a composition bias toward low complexity. The span at 448-458 (ESLSDLPSTSE) shows a compositional bias: polar residues. Residues 491–511 (HGVTHDHEDSNESLSSDERHG) are compositionally biased toward basic and acidic residues. Residues 612–632 (RFLFPLAFGLFNIVYWVYHMY) form a helical membrane-spanning segment.

This sequence belongs to the ligand-gated ion channel (TC 1.A.9) family. Gamma-aminobutyric acid receptor (TC 1.A.9.5) subfamily. GABRQ sub-subfamily. Heteropentamer, formed by a combination of alpha (GABRA1-6), beta (GABRB1-3), gamma (GABRG1-3), delta (GABRD), epsilon (GABRE), rho (GABRR1-3), pi (GABRP) and theta (GABRQ) chains, each subunit exhibiting distinct physiological and pharmacological properties. Expressed in brain.

It is found in the postsynaptic cell membrane. The protein resides in the cell membrane. The catalysed reaction is chloride(in) = chloride(out). With respect to regulation, potentiated by etomidate, propofol, pregnanolone and pentobarbital. Its function is as follows. Theta subunit of the heteropentameric ligand-gated chloride channel gated by gamma-aminobutyric acid (GABA), a major inhibitory neurotransmitter in the brain. GABA-gated chloride channels, also named GABA(A) receptors (GABAAR), consist of five subunits arranged around a central pore and contain GABA active binding site(s) located at the alpha and beta subunit interfaces. When activated by GABA, GABAARs selectively allow the flow of chloride anions across the cell membrane down their electrochemical gradient. In Homo sapiens (Human), this protein is Gamma-aminobutyric acid receptor subunit theta.